Reading from the N-terminus, the 213-residue chain is Pyrrolidone-carboxylate peptidase (213 aa).

Active-site residues include Glu78, Cys141, and His165.

It belongs to the peptidase C15 family. As to quaternary structure, homotetramer.

The protein resides in the cytoplasm. It carries out the reaction Release of an N-terminal pyroglutamyl group from a polypeptide, the second amino acid generally not being Pro.. Its function is as follows. Removes 5-oxoproline from various penultimate amino acid residues except L-proline. This Clostridium perfringens (strain 13 / Type A) protein is Pyrrolidone-carboxylate peptidase.